A 949-amino-acid polypeptide reads, in one-letter code: Bifunctional glutamine synthetase adenylyltransferase/adenylyl-removing enzyme (949 aa).

An adenylyl removase region spans residues 1-450 (MQNQGNKVLS…HFNATVGGTD (450 aa)). An adenylyl transferase region spans residues 455–949 (NDHWTALFWN…IEIYNEILAI (495 aa)).

It belongs to the GlnE family. Mg(2+) serves as cofactor.

It carries out the reaction [glutamine synthetase]-O(4)-(5'-adenylyl)-L-tyrosine + phosphate = [glutamine synthetase]-L-tyrosine + ADP. The enzyme catalyses [glutamine synthetase]-L-tyrosine + ATP = [glutamine synthetase]-O(4)-(5'-adenylyl)-L-tyrosine + diphosphate. Its function is as follows. Involved in the regulation of glutamine synthetase GlnA, a key enzyme in the process to assimilate ammonia. When cellular nitrogen levels are high, the C-terminal adenylyl transferase (AT) inactivates GlnA by covalent transfer of an adenylyl group from ATP to specific tyrosine residue of GlnA, thus reducing its activity. Conversely, when nitrogen levels are low, the N-terminal adenylyl removase (AR) activates GlnA by removing the adenylyl group by phosphorolysis, increasing its activity. The regulatory region of GlnE binds the signal transduction protein PII (GlnB) which indicates the nitrogen status of the cell. This chain is Bifunctional glutamine synthetase adenylyltransferase/adenylyl-removing enzyme, found in Shewanella frigidimarina (strain NCIMB 400).